Here is an 89-residue protein sequence, read N- to C-terminus: Small ribosomal subunit protein uS15 (89 aa).

This sequence belongs to the universal ribosomal protein uS15 family. Part of the 30S ribosomal subunit. Forms a bridge to the 50S subunit in the 70S ribosome, contacting the 23S rRNA.

In terms of biological role, one of the primary rRNA binding proteins, it binds directly to 16S rRNA where it helps nucleate assembly of the platform of the 30S subunit by binding and bridging several RNA helices of the 16S rRNA. Forms an intersubunit bridge (bridge B4) with the 23S rRNA of the 50S subunit in the ribosome. This Saccharophagus degradans (strain 2-40 / ATCC 43961 / DSM 17024) protein is Small ribosomal subunit protein uS15.